A 105-amino-acid polypeptide reads, in one-letter code: Cyclotide vibi-E (105 aa).

The first 9 residues, 1–9, serve as a signal peptide directing secretion; that stretch reads AAFALPALA. Residues 10–69 constitute a propeptide that is removed on maturation; the sequence is SSFEKDVISFRAIQAVLEKRGLSKLEDDPVLSALAHTKTIISNPVIEEALLNGANLKAGN. Residues 70-99 constitute a cross-link (cyclopeptide (Gly-Asn)); it reads GIPCAESCVWIPCTVTALIGCGCSNKVCYN. 3 disulfide bridges follow: Cys-73-Cys-90, Cys-77-Cys-92, and Cys-82-Cys-97. Positions 100 to 105 are excised as a propeptide; sequence SLQTKY.

This is a cyclic peptide.

Functionally, probably participates in a plant defense mechanism. Has cytotoxic activity, active against a human lymphoma cell line with an IC(50) of 3.2 uM. In Viola biflora (Yellow wood violet), this protein is Cyclotide vibi-E.